A 72-amino-acid chain; its full sequence is UPF0352 protein SO_2176 (72 aa).

The protein belongs to the UPF0352 family.

The sequence is that of UPF0352 protein SO_2176 from Shewanella oneidensis (strain ATCC 700550 / JCM 31522 / CIP 106686 / LMG 19005 / NCIMB 14063 / MR-1).